We begin with the raw amino-acid sequence, 429 residues long: Serine transporter SdaC (429 aa).

Residues 1–22 (METTQTSTIASKDSRSAWRKTD) lie on the Cytoplasmic side of the membrane. The helical transmembrane segment at 23–43 (TMWMLGLYGTAIGAGVLFLPI) threads the bilayer. Residues 44–46 (NAG) are Periplasmic-facing. Residues 47–67 (VGGMIPLIIMAILAFPMTFFA) traverse the membrane as a helical segment. The Cytoplasmic portion of the chain corresponds to 68-99 (HRGLTRFVLSGKNPGEDITEVVEEHFGIGAGK). Residues 100-120 (LITLLYFFAIYPILLVYSVAI) traverse the membrane as a helical segment. The Periplasmic segment spans residues 121 to 140 (TNTVESFMSHQLGMTPPPRA). The helical transmembrane segment at 141-161 (ILSLILIVGMMTIVRFGEQMI) threads the bilayer. Over 162–163 (VK) the chain is Cytoplasmic. Residues 164–184 (AMSILVFPFVGVLMLLALYLI) form a helical membrane-spanning segment. Over 185 to 201 (PQWNGAALETLSLDTAS) the chain is Periplasmic. A helical membrane pass occupies residues 202 to 222 (ATGNGLWMTLWLAIPVMVFSF). The Cytoplasmic segment spans residues 223–249 (NHSPIISSFAVAKREEYGDMAEQKCSK). The helical transmembrane segment at 250–270 (ILAFAHIMMVLTVMFFVFSCV) threads the bilayer. The Periplasmic segment spans residues 271–297 (LSLTPADLAAAKEQNISILSYLANHFN). The helical transmembrane segment at 298–318 (APVIAWMAPIIAIIAITKSFL) threads the bilayer. Topologically, residues 319 to 347 (GHYLGAREGFNGMVIKSLRGKGKSIEINK) are cytoplasmic. The chain crosses the membrane as a helical span at residues 348–368 (LNRITALFMLVTTWIVATLNP). Position 369 (Ser369) is a topological domain, periplasmic. The chain crosses the membrane as a helical span at residues 370–390 (ILGMIETLGGPIIAMILFLMP). Topologically, residues 391 to 406 (MYAIQKVPAMRKYSGH) are cytoplasmic. The helical transmembrane segment at 407 to 427 (ISNVFVVVMGLIAISAIFYSL) threads the bilayer. Residues 428–429 (FS) lie on the Periplasmic side of the membrane.

The protein belongs to the amino acid/polyamine transporter 2 family. SdaC/TdcC subfamily.

Its subcellular location is the cell inner membrane. The catalysed reaction is L-serine(in) + H(+)(in) = L-serine(out) + H(+)(out). In terms of biological role, mediates the import of L-serine into the cell. Is energized by proton cotransport. This is Serine transporter SdaC (sdaC) from Escherichia coli O157:H7.